Consider the following 469-residue polypeptide: 3-isopropylmalate dehydratase large subunit (469 aa).

The [4Fe-4S] cluster site is built by cysteine 350, cysteine 410, and cysteine 413.

This sequence belongs to the aconitase/IPM isomerase family. LeuC type 1 subfamily. Heterodimer of LeuC and LeuD. [4Fe-4S] cluster serves as cofactor.

The catalysed reaction is (2R,3S)-3-isopropylmalate = (2S)-2-isopropylmalate. It participates in amino-acid biosynthesis; L-leucine biosynthesis; L-leucine from 3-methyl-2-oxobutanoate: step 2/4. Its function is as follows. Catalyzes the isomerization between 2-isopropylmalate and 3-isopropylmalate, via the formation of 2-isopropylmaleate. The chain is 3-isopropylmalate dehydratase large subunit from Sinorhizobium medicae (strain WSM419) (Ensifer medicae).